The sequence spans 80 residues: MAERSQNLQDLFLNTVRKQKISLTIFLINGVKLTGVVTSFDNFCVLLRRDGHSQLVYKHAISTIMPGQPMQMFESEEVAS.

Residues D10 to M70 enclose the Sm domain.

The protein belongs to the Hfq family. In terms of assembly, homohexamer.

Functionally, RNA chaperone that binds small regulatory RNA (sRNAs) and mRNAs to facilitate mRNA translational regulation in response to envelope stress, environmental stress and changes in metabolite concentrations. Also binds with high specificity to tRNAs. The sequence is that of RNA-binding protein Hfq from Rhizobium rhizogenes (strain K84 / ATCC BAA-868) (Agrobacterium radiobacter).